The sequence spans 1028 residues: Pentatricopeptide repeat-containing protein At3g09040, mitochondrial (1028 aa).

Residues 1–30 (MYFRVLLTPSSAMFDSFSFVRRLSYSPDLG) constitute a mitochondrion transit peptide. PPR repeat units follow at residues 94–123 (EGRL…FLEK), 124–158 (DVTA…QIFP), 159–193 (NKFT…GLER), 194–224 (NSYC…IVDP), 225–259 (NTVC…GHRP), 260–290 (DHLA…MSSP), 291–325 (DVVA…SVKS), 326–360 (TRST…GLAS), 361–391 (NIYV…LEEK), 392–426 (NDVF…GYNI), 427–461 (DDFT…KLAK), 462–492 (NLFV…MCDR), 493–527 (DNVT…GIVS), 528–562 (DGAC…GLDR), 563–593 (DLHT…LPEW), 594–627 (SVVS…GVNP), 628–662 (SEIT…GFSS), 664–694 (GEYL…LSSP), 696–730 (SIVL…GVLP), 731–765 (DQAT…AHDL), 766–796 (DELT…MRRR), 798–832 (NVVS…HIMP), 833–863 (DEIT…MIGQ), and 869–899 (RVDH…QNLK). The tract at residues 904-979 (LWSSLLGACR…VPGYSWIDVE (76 aa)) is type E motif. The tract at residues 980-1010 (QRTHIFAAGDKSHSEIGKIEMFLEDLYDLMK) is type E(+) motif.

This sequence belongs to the PPR family. PCMP-E subfamily.

The protein resides in the mitochondrion. This chain is Pentatricopeptide repeat-containing protein At3g09040, mitochondrial (PCMP-E88), found in Arabidopsis thaliana (Mouse-ear cress).